A 607-amino-acid polypeptide reads, in one-letter code: Phosphatidylinositol 4-kinase LSB6 (607 aa).

A compositionally biased stretch (polar residues) spans 73–88 (NVPSESPRPDQTSGSN). A disordered region spans residues 73 to 93 (NVPSESPRPDQTSGSNPAVGL). Residues 161–522 (GRELERIQTG…LVRRTRCQVI (362 aa)) form the PI3K/PI4K catalytic domain. The G-loop stretch occupies residues 167 to 173 (IQTGSSG). The interval 318-356 (KSSGEDINHKPETTRNLTDETEPSKQINSSPISTESEEN) is disordered. Positions 319-330 (SSGEDINHKPET) are enriched in basic and acidic residues. Positions 341–351 (SKQINSSPIST) are enriched in polar residues. The tract at residues 384-392 (RNTDRGLDN) is catalytic loop. An activation loop region spans residues 411 to 431 (AIDNGLSFPWKHPDEWRLYPY).

The protein belongs to the PI3/PI4-kinase family. In terms of assembly, interacts with LAS17. Requires Mg(2+) as cofactor. The cofactor is Mn(2+).

It is found in the cell membrane. It localises to the vacuole membrane. It carries out the reaction a 1,2-diacyl-sn-glycero-3-phospho-(1D-myo-inositol) + ATP = a 1,2-diacyl-sn-glycero-3-phospho-(1D-myo-inositol 4-phosphate) + ADP + H(+). Its function is as follows. May play a role in endocytic and/or exocytic pathways. In Saccharomyces cerevisiae (strain ATCC 204508 / S288c) (Baker's yeast), this protein is Phosphatidylinositol 4-kinase LSB6 (LSB6).